A 436-amino-acid chain; its full sequence is Serine--tRNA ligase (436 aa).

242–244 (TAE) contacts L-serine. 273–275 (RSE) serves as a coordination point for ATP. L-serine is bound at residue glutamate 296. Residue 360–363 (EISS) coordinates ATP. Position 395 (serine 395) interacts with L-serine.

Belongs to the class-II aminoacyl-tRNA synthetase family. Type-1 seryl-tRNA synthetase subfamily. Homodimer. The tRNA molecule binds across the dimer.

Its subcellular location is the cytoplasm. It catalyses the reaction tRNA(Ser) + L-serine + ATP = L-seryl-tRNA(Ser) + AMP + diphosphate + H(+). The enzyme catalyses tRNA(Sec) + L-serine + ATP = L-seryl-tRNA(Sec) + AMP + diphosphate + H(+). It functions in the pathway aminoacyl-tRNA biosynthesis; selenocysteinyl-tRNA(Sec) biosynthesis; L-seryl-tRNA(Sec) from L-serine and tRNA(Sec): step 1/1. Its function is as follows. Catalyzes the attachment of serine to tRNA(Ser). Is also able to aminoacylate tRNA(Sec) with serine, to form the misacylated tRNA L-seryl-tRNA(Sec), which will be further converted into selenocysteinyl-tRNA(Sec). The polypeptide is Serine--tRNA ligase (Polynucleobacter asymbioticus (strain DSM 18221 / CIP 109841 / QLW-P1DMWA-1) (Polynucleobacter necessarius subsp. asymbioticus)).